The following is a 318-amino-acid chain: tRNA uridine(34) hydroxylase (318 aa).

The region spanning 123–217 is the Rhodanese domain; the sequence is EDDDTVIIDA…YGKDPETKGQ (95 aa). Residue Cys-177 is the Cysteine persulfide intermediate of the active site.

This sequence belongs to the TrhO family.

It catalyses the reaction uridine(34) in tRNA + AH2 + O2 = 5-hydroxyuridine(34) in tRNA + A + H2O. Catalyzes oxygen-dependent 5-hydroxyuridine (ho5U) modification at position 34 in tRNAs. The protein is tRNA uridine(34) hydroxylase of Staphylococcus aureus (strain Mu3 / ATCC 700698).